Reading from the N-terminus, the 1344-residue chain is MAEMKSPTKAEPASPAEAPQGDRRSLLEHSREFLDFFWDIAKPDQETRLRATEKLLEYLRTRPSDSEMKYALKRLITGLGVGREAARPCYSLALAQLLQSFEDIQLCDILGQIQEKYNLQAMNKAMMRPTLFANLFGVLALFQSGRLVKDKEALMKCVRLLKILSHHYNHLQGQPVKALVDILSEVPESMFQEILPKVLKGDMKVILSSPKYLELFLLARQRVPAELESLVGSVDLFSEDNIPSLVNILKVAANSVKKEQKLPDVALNLLRLALQENKFERFWKEVLEEGLLKKPSYTSSYMCFRLLGASLPLLSDEQLQLVMRGDLIRHFGEHMVVSKSQNPLRFIPEISAYVGTFLEGCQDDPKRQFTVMVAFTAITNQGLPVMPTFWRVTRFLNTEALQNYVTWLRDMFLQPDLDSLVDFSTANQKRVQVASLNVPERTVFRLRKWIIHRLVSLVDHLHLEKDEAVVEQIARFCLFHAFFKTKKATPQIPETKQHFSFPLEDGNRGVIVSAFFSLLQTLSVKFRQTPDLAENGKPWTYRLVQLADMLLKHNRNVANVTPLTAQQRQAWDQMMSTLKELEAQSSETRAIAFQHLLLLVGLHLFKSPAESCDVLGDIQTCIKKSMEQNLRRSRSRAKASQEPVWVEVMVEILLSLLAQPSNLMRQVVRSVFGHVCSHLTPRGLQLILAVLNPETNEDEEDNVVVTDTDEKQLKHGEDADSDSEDSKNSESDVDSEDGEESEEEDRDKDVDPGFRQQLMEVLQAGNALGGEEEEEEELGDEAMMALDQNLASLFAEQKMRIQARHEEKNKLQKEKQLRRDFQIRALDLIEVLVTKQPEHPLILELLEPLLNIIQRSMRSRGSTKQEQDLLHKTARIFMHHLCRARHYCHEVEPGAEALHAQVERLVQQAGNQADASVALYYFNASLYLLRVLKGNTTKRYQDGQKLEGADIKSEPKDSEVQTTSCLDLDFVTRVYSASLESLLTKRNSPLTIPMFLDLFSRYPVICKNLLPIVVQHVAGSSRPRHQAQACLLLQKALSARELRVCFEDPEWEQLISQVLGKTTQTLQTLGEAQSKGEHQRELSILELLNTVFRIVNHEKLSVDLTAFLGMLQGKQQKLQQNLQQGNHSSGSSRLYDLYWQAMNLLGVQRPKSEKKNVKDIPSDSQSPISTKRKKKGFLPETKKRKKLKSEGTTSEKKAASQQDAVTEGAMPAATGKDQPPSTGKKRRKRVKANTPSQVNGVTVAKSPAPNNPTLSPSTPPAKTPKVQKKKEKLSQVNGSTPVSPVEPESKKHQKALSTKEVKRRSSQSALPKKRARLSLVSRSPSLLQSGIRKRRVARRRVQTP.

The interval 1 to 24 (MAEMKSPTKAEPASPAEAPQGDRR) is disordered. An N-acetylalanine modification is found at A2. Residues 2–580 (AEMKSPTKAE…WDQMMSTLKE (579 aa)) are interaction with MYB. A Phosphoserine modification is found at S14. 2 positions are modified to N6-acetyllysine: K69 and K156. Short sequence motifs (nuclear export signal) lie at residues 238–256 (SEDNIPSLVNILKVAANSV) and 261–279 (KLPDVALNLLRLALQENKF). 2 disordered regions span residues 696-752 (NEDE…DVDP) and 1150-1344 (PKSE…VQTP). Basic and acidic residues predominate over residues 708–730 (TDEKQLKHGEDADSDSEDSKNSE). Residues 731 to 746 (SDVDSEDGEESEEEDR) are compositionally biased toward acidic residues. The segment covering 1150–1161 (PKSEKKNVKDIP) has biased composition (basic and acidic residues). K1151 participates in a covalent cross-link: Glycyl lysine isopeptide (Lys-Gly) (interchain with G-Cter in SUMO2). Residues 1154 to 1344 (KKNVKDIPSD…RVARRRVQTP (191 aa)) form a required for nuclear and nucleolar localization region. Phosphoserine occurs at positions 1162 and 1166. The span at 1170 to 1187 (TKRKKKGFLPETKKRKKL) shows a compositional bias: basic residues. S1189 is subject to Phosphoserine. T1193 bears the Phosphothreonine mark. S1221 and S1246 each carry phosphoserine. Over residues 1247 to 1256 (PAPNNPTLSP) the composition is skewed to low complexity. T1253 carries the phosphothreonine modification. Phosphoserine is present on S1255. T1258 and T1280 each carry phosphothreonine. 3 positions are modified to phosphoserine: S1283, S1305, and S1318. Residues 1301 to 1316 (VKRRSSQSALPKKRAR) show a composition bias toward basic residues. The span at 1317–1329 (LSLVSRSPSLLQS) shows a compositional bias: low complexity. The residue at position 1322 (R1322) is a Citrulline. Phosphoserine occurs at positions 1323, 1325, and 1329. The segment covering 1331–1344 (IRKRRVARRRVQTP) has biased composition (basic residues).

Belongs to the MYBBP1A family. Binds to and represses JUN and MYB via the leucine zipper regions present in these proteins. Also binds to and represses PPARGC1A: this interaction is abrogated when PPARGC1A is phosphorylated by MAPK1/ERK. Binds to and stimulates transcription by AHR. Binds to KPNA2. Component of the B-WICH complex, at least composed of SMARCA5/SNF2H, BAZ1B/WSTF, SF3B1, DEK, MYO1C, ERCC6, MYBBP1A and DDX21. Interacts with CLOCK and CRY1. In terms of processing, citrullinated by PADI4.

Its subcellular location is the nucleus. It is found in the nucleolus. The protein resides in the cytoplasm. In terms of biological role, may activate or repress transcription via interactions with sequence specific DNA-binding proteins. Repression may be mediated at least in part by histone deacetylase activity (HDAC activity). Acts as a corepressor and in concert with CRY1, represses the transcription of the core circadian clock component PER2. Preferentially binds to dimethylated histone H3 'Lys-9' (H3K9me2) on the PER2 promoter. Has a role in rRNA biogenesis together with PWP1. The polypeptide is Myb-binding protein 1A (Mybbp1a) (Rattus norvegicus (Rat)).